The chain runs to 24 residues: Outer membrane protein (24 aa).

This sequence belongs to the Gram-negative porin family. Homotrimer.

Its subcellular location is the cell outer membrane. Forms pores that allow passive diffusion of small molecules across the outer membrane. This chain is Outer membrane protein, found in Sodalis glossinidius.